We begin with the raw amino-acid sequence, 39 residues long: Large ribosomal subunit protein bL36 (39 aa).

This sequence belongs to the bacterial ribosomal protein bL36 family.

The sequence is that of Large ribosomal subunit protein bL36 from Limosilactobacillus reuteri (strain DSM 20016) (Lactobacillus reuteri).